The chain runs to 500 residues: UDP-N-acetylmuramoyl-L-alanyl-D-glutamate--2,6-diaminopimelate ligase (500 aa).

UDP-N-acetyl-alpha-D-muramoyl-L-alanyl-D-glutamate-binding positions include L26, S28, and 43 to 45; that span reads HQV. 123-129 provides a ligand contact to ATP; the sequence is GTNGKTT. UDP-N-acetyl-alpha-D-muramoyl-L-alanyl-D-glutamate is bound by residues N164, 165-166, S192, Q198, and R200; that span reads TT. The residue at position 232 (K232) is an N6-carboxylysine. Residues R399, 423 to 426, G474, and E478 contribute to the meso-2,6-diaminopimelate site; that span reads DNPR. Positions 423 to 426 match the Meso-diaminopimelate recognition motif motif; that stretch reads DNPR.

Belongs to the MurCDEF family. MurE subfamily. Requires Mg(2+) as cofactor. Carboxylation is probably crucial for Mg(2+) binding and, consequently, for the gamma-phosphate positioning of ATP.

It localises to the cytoplasm. The enzyme catalyses UDP-N-acetyl-alpha-D-muramoyl-L-alanyl-D-glutamate + meso-2,6-diaminopimelate + ATP = UDP-N-acetyl-alpha-D-muramoyl-L-alanyl-gamma-D-glutamyl-meso-2,6-diaminopimelate + ADP + phosphate + H(+). It functions in the pathway cell wall biogenesis; peptidoglycan biosynthesis. Catalyzes the addition of meso-diaminopimelic acid to the nucleotide precursor UDP-N-acetylmuramoyl-L-alanyl-D-glutamate (UMAG) in the biosynthesis of bacterial cell-wall peptidoglycan. The protein is UDP-N-acetylmuramoyl-L-alanyl-D-glutamate--2,6-diaminopimelate ligase of Actinobacillus pleuropneumoniae serotype 5b (strain L20).